We begin with the raw amino-acid sequence, 261 residues long: Dienlactone hydrolase 1 (261 aa).

Residues Cys-147, Asp-194, and His-226 contribute to the active site.

It belongs to the dienelactone hydrolase family.

It participates in xenobiotic degradation. Its function is as follows. Dienlactone hydrolase; part of the Fusarium detoxification of benzoxazolinone cluster 1 (FDB1) involved in the degradation of benzoxazolinones produced by the host plant. Maize, wheat, and rye produce the 2 benzoxazinone phytoanticipins 2,4-dihy-droxy-7-methoxy-1,4-benzoxazin-3-one (DIMBOA) and 2,4-dihydroxy-1,4-benzoxazin-3-one (DIBOA) that, due to their inherent instability once released, spontaneously degrade to the more stable corresponding benzoxazolinones, 6-methoxy-2-benzoxazolinone (MBOA) and 2-benzoxazolinone (BOA), respectively. The first step in the detoxification of benzoxazolinones involves the hydrolysis of the cyclic ester bond of benzoxazolinones by the FDB1 cluster gamma-lactamase MBL1 to aminophenols. MBL1 is able to convert BOA into 2-aminophenol (2-AP), as well as MBOA into 5-methoxy-2-aminophenol (2-AMP). The FDB2 cluster N-malonyltransferase FDB2/NAT1 then metabolizes aminophenols via N-malonylation to non-toxic malonamic acids. FDB2/NAT1 converts 2-AP into N-(2-hydroxyphenyl) malonamic acid (HPMA) and 2-AMP into N-(2-hydroxy-4-methoxyphenyl) malonamic acid (HMPMA). The duplicated dienlactone hydrolases DLH1 and DLH2 may provide redundant function for hydrolyzing the lactone moiety in the BOA molecule. The roles of the amidases and other enzymes encoded by the 2 FDB clusters have not been identified so far. The polypeptide is Dienlactone hydrolase 1 (Gibberella moniliformis (strain M3125 / FGSC 7600) (Maize ear and stalk rot fungus)).